Consider the following 352-residue polypeptide: Inhibin beta C chain (352 aa).

Residues 1–18 form the signal peptide; that stretch reads MASSLLLALLFLTPTTVV. A propeptide spanning residues 19 to 236 is cleaved from the precursor; the sequence is NPKTEGPCPA…VEGKHRVRRR (218 aa). 4 N-linked (GlcNAc...) asparagine glycosylation sites follow: N111, N143, N161, and N173. 4 cysteine pairs are disulfide-bonded: C240/C248, C247/C317, C276/C349, and C280/C351.

Belongs to the TGF-beta family. Homodimeric or heterodimeric through association with alpha and beta subunits, linked by one or more disulfide bonds. Inhibins are heterodimers of one alpha and one beta subunit. Activins are homo- or heterodimers of beta subunits only. As to expression, mainly expressed in the adult liver.

It localises to the secreted. Its function is as follows. Inhibins and activins inhibit and activate, respectively, the secretion of follitropin by the pituitary gland. Inhibins/activins are involved in regulating a number of diverse functions such as hypothalamic and pituitary hormone secretion, gonadal hormone secretion, germ cell development and maturation, erythroid differentiation, insulin secretion, nerve cell survival, embryonic axial development or bone growth, depending on their subunit composition. Inhibins appear to oppose the functions of activins. This is Inhibin beta C chain (Inhbc) from Mus musculus (Mouse).